A 484-amino-acid chain; its full sequence is Myosin-binding protein H (484 aa).

The disordered stretch occupies residues 1–78; that stretch reads MTGKATPEAS…KPEAPSEDVP (78 aa). 3 positions are modified to phosphothreonine: threonine 2, threonine 6, and threonine 26. Positions 41 to 71 are enriched in low complexity; sequence QEQAPEPQKQPQAQDPAAHEAPATPATTKPE. One can recognise a Fibronectin type-III 1 domain in the interval 80–175; the sequence is APLQLTLEDV…LDQPVHIQEI (96 aa). Residues 179–267 form the Ig-like C2-type 1 domain; sequence PKIRVPRHLR…EGLEAKAAID (89 aa). The Fibronectin type-III 2 domain occupies 276 to 371; it reads PPSSIKLLDV…TKELAHIHKA (96 aa). The region spanning 389–479 is the Ig-like C2-type 2 domain; sequence PSFTQPVADR…PAVDCRLEVK (91 aa).

This sequence belongs to the immunoglobulin superfamily. MyBP family. In terms of tissue distribution, skeletal muscle.

Binds to myosin; probably involved in interaction with thick myofilaments in the A-band. This is Myosin-binding protein H (Mybph) from Rattus norvegicus (Rat).